The following is a 743-amino-acid chain: Ovocleidin-116 (743 aa).

The first 18 residues, 1–18 (MRATLFCLCLCLLGTVLP), serve as a signal peptide directing secretion. Cys-31 and Cys-42 are joined by a disulfide. An N-linked (GlcNAc...) asparagine glycan is attached at Asn-62. Residues 68–225 (KEEGDHQGTI…GTMGTGDSAI (158 aa)) form a disordered region. Polar residues predominate over residues 129–141 (DSNSVYPTSTSVE). A compositionally biased stretch (gly residues) spans 169 to 179 (GPHGDGDGGNG). N-linked (GlcNAc...) asparagine; partial glycosylation is present at Asn-293. 6 disordered regions span residues 333–356 (GDSV…ATEI), 385–454 (SGKG…GPER), 505–534 (ARTQ…QQEV), 549–577 (RHRA…STGG), 628–649 (DPWV…TVAG), and 692–743 (SGVG…RQSL). A compositionally biased stretch (low complexity) spans 402-420 (ATMTTRGGRGTASSGLTTG). Polar residues predominate over residues 421–431 (DCSTAASTPSR). Over residues 549–558 (RHRARVRPES) the composition is skewed to basic and acidic residues.

It belongs to the osteoregulin family. Post-translationally, asn-62 is fully glycosylated, whereas only less than 10% of Asn-293 seem to be glycosylated. In terms of tissue distribution, in the eggshell, expressed mainly in the palisade and mammillary layers. Expression also detected in the hypertrophic zone of the epiphyseal growth plate, and in cortical and medullary bone (at protein level). Highly expressed in uterus. Not detected in the proximal oviduct, liver, magnum, duodenum and kidney.

It localises to the secreted. The protein resides in the extracellular space. Its subcellular location is the extracellular matrix. In terms of biological role, major component of the eggshell matrix. May play an important role in the regulation of calcite growth during eggshell calcification. May also regulate the mineralization process in developing and growing bones. The sequence is that of Ovocleidin-116 from Gallus gallus (Chicken).